We begin with the raw amino-acid sequence, 180 residues long: NADH-quinone oxidoreductase subunit I (180 aa).

2 consecutive 4Fe-4S ferredoxin-type domains span residues 50-80 and 90-119; these read LTRDPDGEERCVACNLCAVACPVGCISLQKT and EFFRINFSRCIFCGLCEEACPTTAIQLTPD. Positions 60, 63, 66, 70, 99, 102, 105, and 109 each coordinate [4Fe-4S] cluster.

This sequence belongs to the complex I 23 kDa subunit family. As to quaternary structure, NDH-1 is composed of 13 different subunits. Subunits NuoA, H, J, K, L, M, N constitute the membrane sector of the complex. Requires [4Fe-4S] cluster as cofactor.

The protein resides in the cell inner membrane. It catalyses the reaction a quinone + NADH + 5 H(+)(in) = a quinol + NAD(+) + 4 H(+)(out). NDH-1 shuttles electrons from NADH, via FMN and iron-sulfur (Fe-S) centers, to quinones in the respiratory chain. The immediate electron acceptor for the enzyme in this species is believed to be ubiquinone. Couples the redox reaction to proton translocation (for every two electrons transferred, four hydrogen ions are translocated across the cytoplasmic membrane), and thus conserves the redox energy in a proton gradient. This is NADH-quinone oxidoreductase subunit I from Shigella dysenteriae serotype 1 (strain Sd197).